Reading from the N-terminus, the 100-residue chain is Urease subunit gamma (100 aa).

This sequence belongs to the urease gamma subunit family. Heterotrimer of UreA (gamma), UreB (beta) and UreC (alpha) subunits. Three heterotrimers associate to form the active enzyme.

It is found in the cytoplasm. It carries out the reaction urea + 2 H2O + H(+) = hydrogencarbonate + 2 NH4(+). Its pathway is nitrogen metabolism; urea degradation; CO(2) and NH(3) from urea (urease route): step 1/1. The chain is Urease subunit gamma from Thioalkalivibrio sulfidiphilus (strain HL-EbGR7).